The primary structure comprises 223 residues: Peroxynitrite isomerase 1 (223 aa).

The GXWXGXG motif lies at 69–75; it reads GVWRGEG. The heme b site is built by Lys186 and His213.

Belongs to the nitrobindin family. In terms of assembly, homodimer. Heme b is required as a cofactor.

It catalyses the reaction peroxynitrite = nitrate. It participates in nitrogen metabolism. Functionally, heme-binding protein able to scavenge peroxynitrite and to protect free L-tyrosine against peroxynitrite-mediated nitration, by acting as a peroxynitrite isomerase that converts peroxynitrite to nitrate. Therefore, this protein likely plays a role in peroxynitrite sensing and in the detoxification of reactive nitrogen and oxygen species (RNS and ROS, respectively). Is able to bind nitric oxide (NO) in vitro, but may act as a sensor of peroxynitrite levels in vivo. The protein is Peroxynitrite isomerase 1 of Mycobacterium marinum (strain ATCC BAA-535 / M).